The primary structure comprises 378 residues: IDS-type sesquiterpene synthase (378 aa).

Residues aspartate 120 and aspartate 124 each contribute to the Mg(2+) site. Residues 120–124 carry the DDXXD motif motif; it reads DDYVD.

The protein belongs to the terpene synthase family. Mg(2+) is required as a cofactor. Highly expressed in male epidermal tissue associated with the cuticle of ventral sternites.

The enzyme catalyses (2Z,6E)-farnesyl diphosphate = (Z)-alpha-bisabolene + diphosphate. It functions in the pathway pheromone biosynthesis. In terms of biological role, sesquiterpene alcohol synthase that catalyzes the formation of the pheromone precursor (Z)-alpha-bisabolene from (2Z,6E)-farnesyl diphosphate. This Nezara viridula (Southern green stink bug) protein is IDS-type sesquiterpene synthase.